A 1887-amino-acid polypeptide reads, in one-letter code: Protein TIC 214 (1887 aa).

A run of 6 helical transmembrane segments spans residues Ile-18–Gly-38, Phe-64–Leu-84, Pro-87–His-107, Leu-124–Leu-144, Val-172–Ile-192, and Ile-221–Ile-241. Disordered regions lie at residues Glu-248–Asp-300, Glu-786–Arg-805, and Leu-1569–Pro-1603. Over residues Val-256–Thr-268 the composition is skewed to acidic residues. Residues Lys-775 to Ala-816 adopt a coiled-coil conformation. The segment covering Arg-1578–Asn-1597 has biased composition (basic and acidic residues).

The protein belongs to the TIC214 family. As to quaternary structure, part of the Tic complex.

Its subcellular location is the plastid. It localises to the chloroplast inner membrane. Its function is as follows. Involved in protein precursor import into chloroplasts. May be part of an intermediate translocation complex acting as a protein-conducting channel at the inner envelope. The chain is Protein TIC 214 from Solanum bulbocastanum (Wild potato).